A 360-amino-acid polypeptide reads, in one-letter code: Phospho-N-acetylmuramoyl-pentapeptide-transferase (360 aa).

Transmembrane regions (helical) follow at residues 25–45 (TGGA…WIID), 71–91 (TPTM…VLWA), 94–114 (LNPY…VGFY), 129–148 (SGRT…CYAL), 168–188 (TAIY…VGAG), 199–219 (GLAI…SYLA), 239–259 (LAVL…FNAP), 263–283 (IFMG…IAVA), 288–308 (FVLA…IVQV), and 337–357 (QIVI…LSTL).

It belongs to the glycosyltransferase 4 family. MraY subfamily. The cofactor is Mg(2+).

It is found in the cell inner membrane. It carries out the reaction UDP-N-acetyl-alpha-D-muramoyl-L-alanyl-gamma-D-glutamyl-meso-2,6-diaminopimeloyl-D-alanyl-D-alanine + di-trans,octa-cis-undecaprenyl phosphate = di-trans,octa-cis-undecaprenyl diphospho-N-acetyl-alpha-D-muramoyl-L-alanyl-D-glutamyl-meso-2,6-diaminopimeloyl-D-alanyl-D-alanine + UMP. The protein operates within cell wall biogenesis; peptidoglycan biosynthesis. Catalyzes the initial step of the lipid cycle reactions in the biosynthesis of the cell wall peptidoglycan: transfers peptidoglycan precursor phospho-MurNAc-pentapeptide from UDP-MurNAc-pentapeptide onto the lipid carrier undecaprenyl phosphate, yielding undecaprenyl-pyrophosphoryl-MurNAc-pentapeptide, known as lipid I. This Rhodopseudomonas palustris (strain BisA53) protein is Phospho-N-acetylmuramoyl-pentapeptide-transferase.